The sequence spans 317 residues: N(5)-(carboxyethyl)ornithine synthase (317 aa).

Arg-15, Lys-71, and His-92 together coordinate pyruvate. Residue 172–177 participates in NADP(+) binding; that stretch reads GSGNVS.

It belongs to the AlaDH/PNT family. CEOS subfamily. Homotetramer.

It catalyses the reaction N(5)-[1(S)-1-carboxyethyl]-L-ornithine + NADP(+) + H2O = L-ornithine + pyruvate + NADPH + H(+). In terms of biological role, catalyzes the NADPH-dependent reductive condensation between pyruvic acid and the side chain amino group of L-ornithine to form N(5)-(L-1-carboxyethyl)-L-ornithine. To a lesser extent, can also use L-lysine as substrate (yielding N(6)-(L-1-carboxyethyl)-L-lysine), and the D-isomers of the 2 basic amino acids. Can use alpha-keto acids other than pyruvate, e.g. glyoxylate. The protein is N(5)-(carboxyethyl)ornithine synthase (ceo) of Clostridium botulinum (strain Hall / ATCC 3502 / NCTC 13319 / Type A).